Here is a 173-residue protein sequence, read N- to C-terminus: 5-hydroxymethyl-dUMP N-hydrolase (173 aa).

At A2 the chain carries N-acetylalanine. Residue G16 participates in 5-hydroxymethyl-dUMP binding. Phosphoserine is present on S17. Positions 18, 19, 20, 87, 89, and 93 each coordinate 5-hydroxymethyl-dUMP. At S87 the chain carries Phosphoserine. S112, S117, S127, and S158 each carry phosphoserine. S117 serves as a coordination point for 5-hydroxymethyl-dUMP.

Belongs to the 2'-deoxynucleoside 5'-phosphate N-hydrolase 1 family. As to quaternary structure, monomer and homodimer.

It localises to the cytoplasm. The protein localises to the nucleus. It carries out the reaction 5-hydroxymethyl-dUMP + H2O = 5-hydroxymethyluracil + 2-deoxy-D-ribose 5-phosphate. Part of a nucleotide salvage pathway that eliminates epigenetically modified 5-hydroxymethyl-dCMP (hmdCMP) in a two-step process entailing deamination to cytotoxic 5-hydroxymethyl-dUMP (hmdUMP), followed by its hydrolysis into 5-hydroxymethyluracil (hmU) and 2-deoxy-D-ribose 5-phosphate (deoxyribosephosphate). Catalyzes the second step in that pathway, the hydrolysis of the N-glycosidic bond in hmdUMP, degrading this cytotoxic nucleotide to avoid its genomic integration. The sequence is that of 5-hydroxymethyl-dUMP N-hydrolase from Mus musculus (Mouse).